A 331-amino-acid polypeptide reads, in one-letter code: MAQLFYDSDADLSLLSGKTVAIIGYGSQGHAHALNLKDSGVNVVVGLYAGSRSAEKAKADGLEVLSVADASAKADWIMVLLPDEFQKEVYEKEIAPHLSAGKVLSFAHGFNIRFELIKPPADVDVLMIAPKGPGHTVRWEYQNGQGVPALFAIEQDASGNARGLAMAYAKGIGGTRAGILETNFKEETETDLFGEQAVLCGGLSELVKAGFETLVEAGYQPELAYFECLHEVKLIVDLMVKGGLSSMRDSISNTAEYGDYVSGPRLITADTKAEMKRILSDIQDGTFAKNFVAECAAGKPEMNKVRARDAEHPIEKVGKGLRSMFSWLKAA.

In terms of domain architecture, KARI N-terminal Rossmann spans 2-182; that stretch reads AQLFYDSDAD…GGTRAGILET (181 aa). Residues 25–28, Ser51, Ser53, and 83–86 contribute to the NADP(+) site; these read YGSQ and DEFQ. His108 is an active-site residue. Gly134 contributes to the NADP(+) binding site. One can recognise a KARI C-terminal knotted domain in the interval 183–328; the sequence is NFKEETETDL…KGLRSMFSWL (146 aa). Mg(2+) contacts are provided by Asp191, Glu195, Glu227, and Glu231. Residue Ser252 participates in substrate binding.

This sequence belongs to the ketol-acid reductoisomerase family. Mg(2+) is required as a cofactor.

The enzyme catalyses (2R)-2,3-dihydroxy-3-methylbutanoate + NADP(+) = (2S)-2-acetolactate + NADPH + H(+). The catalysed reaction is (2R,3R)-2,3-dihydroxy-3-methylpentanoate + NADP(+) = (S)-2-ethyl-2-hydroxy-3-oxobutanoate + NADPH + H(+). It participates in amino-acid biosynthesis; L-isoleucine biosynthesis; L-isoleucine from 2-oxobutanoate: step 2/4. The protein operates within amino-acid biosynthesis; L-valine biosynthesis; L-valine from pyruvate: step 2/4. In terms of biological role, involved in the biosynthesis of branched-chain amino acids (BCAA). Catalyzes an alkyl-migration followed by a ketol-acid reduction of (S)-2-acetolactate (S2AL) to yield (R)-2,3-dihydroxy-isovalerate. In the isomerase reaction, S2AL is rearranged via a Mg-dependent methyl migration to produce 3-hydroxy-3-methyl-2-ketobutyrate (HMKB). In the reductase reaction, this 2-ketoacid undergoes a metal-dependent reduction by NADPH to yield (R)-2,3-dihydroxy-isovalerate. The polypeptide is Ketol-acid reductoisomerase (NADP(+)) (Synechococcus sp. (strain CC9311)).